A 115-amino-acid polypeptide reads, in one-letter code: NAD(P)H-quinone oxidoreductase subunit M (115 aa).

The protein belongs to the complex I NdhM subunit family. In terms of assembly, NDH-1 can be composed of about 15 different subunits; different subcomplexes with different compositions have been identified which probably have different functions.

It is found in the cellular thylakoid membrane. The enzyme catalyses a plastoquinone + NADH + (n+1) H(+)(in) = a plastoquinol + NAD(+) + n H(+)(out). It catalyses the reaction a plastoquinone + NADPH + (n+1) H(+)(in) = a plastoquinol + NADP(+) + n H(+)(out). Its function is as follows. NDH-1 shuttles electrons from an unknown electron donor, via FMN and iron-sulfur (Fe-S) centers, to quinones in the respiratory and/or the photosynthetic chain. The immediate electron acceptor for the enzyme in this species is believed to be plastoquinone. Couples the redox reaction to proton translocation, and thus conserves the redox energy in a proton gradient. Cyanobacterial NDH-1 also plays a role in inorganic carbon-concentration. This is NAD(P)H-quinone oxidoreductase subunit M from Parasynechococcus marenigrum (strain WH8102).